We begin with the raw amino-acid sequence, 456 residues long: Exodeoxyribonuclease 7 large subunit (456 aa).

This sequence belongs to the XseA family. In terms of assembly, heterooligomer composed of large and small subunits.

The protein resides in the cytoplasm. It carries out the reaction Exonucleolytic cleavage in either 5'- to 3'- or 3'- to 5'-direction to yield nucleoside 5'-phosphates.. In terms of biological role, bidirectionally degrades single-stranded DNA into large acid-insoluble oligonucleotides, which are then degraded further into small acid-soluble oligonucleotides. The sequence is that of Exodeoxyribonuclease 7 large subunit from Azotobacter vinelandii (strain DJ / ATCC BAA-1303).